The sequence spans 410 residues: Beta-arrestin-2 (410 aa).

At tyrosine 48 the chain carries Phosphotyrosine. 2 positions are modified to hydroxyproline; by PHD2: proline 176 and proline 181. The interval 241-410 (ADICLFSTAQ…KDDDCDDQFC (170 aa)) is interaction with TRAF6. Residue serine 361 is modified to Phosphoserine. The segment at 364–410 (RETDVPVDTNLIEFDTNYATDDDIVFEDFARLRLKGMKDDDCDDQFC) is interaction with AP2B1. Phosphothreonine is present on threonine 383. The [DE]-X(1,2)-F-X-X-[FL]-X-X-X-R motif signature appears at 386-396 (DIVFEDFARLR).

This sequence belongs to the arrestin family. Homooligomer; the self-association is mediated by InsP6-binding. Heterooligomer with ARRB1; the association is mediated by InsP6-binding. Interacts with ADRB2 and CHRM2. Interacts with PDE4A. Interacts with PDE4D. Interacts with MAPK10, MAPK1 and MAPK3. Interacts with DRD2. Interacts with FSHR. Interacts with CLTC. Interacts with HTR2C. Interacts with CCR5. Interacts with CXCR4. Interacts with SRC. Interacts with DUSP16; the interaction is interrupted by stimulation of AGTR1 and activation of MAPK10. Interacts with CHUK; the interaction is enhanced stimulation of ADRB2. Interacts with RELA. Interacts with MDM2; the interaction is enhanced by activation of GPCRs. Interacts with SLC9A5. Interacts with TRAF6. Interacts with IGF1R. Interacts with ENG. Interacts with ARRB2. Interacts with KIR2DL1, KIR2DL3 and KIR2DL4. Interacts with LDLR. Interacts with AP2B1. Interacts with C5AR1. Interacts with RAF1. Interacts with MAP2K1. Interacts with MAPK1. Interacts with MAPK10; the interaction enhances MAPK10 activation by MAP3K5. Interacts with MAP2K4; the interaction is enhanced by presence of MAP3K5 and MAPK10. Interacts with MAP3K5. Interacts with AKT1. Interacts with IKBKB and MAP3K14. Interacts with SMO (activated). Interacts with GSK3A and GSK3B. Interacts with CXCR4; the interaction is dependent on C-terminal phosphorylation of CXCR4 and allows activation of MAPK1 and MAPK3. Interacts with GPR143. Interacts with HCK and CXCR1 (phosphorylated). Associates with protein phosphatase 2A (PP2A). Interacts with ACKR3 and ACKR4. Interacts with ARRDC1; the interaction is direct. Interacts with GPR61, GPR62 and GPR135. Interacts (via NACHT and LRR domains) with NLRP3; this interaction is direct and inducible by omega-3 polyunsaturated fatty acids (PUFAs). Interacts with FFAR4 (via C-terminus); this interaction is stimulated by long-chain fatty acids (LCFAs). Interacts with GPR35. Interacts with GPR84. Interacts with TIGIT; this interaction inhibits the NF-kappa-B pathway. Interacts with TGFBR3. Post-translationally, phosphorylated at Thr-383 in the cytoplasm; probably dephosphorylated at the plasma membrane. The phosphorylation does not regulate internalization and recycling of ADRB2, interaction with clathrin or AP2B1. The ubiquitination status appears to regulate the formation and trafficking of beta-arrestin-GPCR complexes and signaling. Ubiquitination appears to occur GPCR-specific. Ubiquitinated by MDM2; the ubiquitination is required for rapid internalization of ADRB2. Deubiquitinated by USP33; the deubiquitination leads to a dissociation of the beta-arrestin-GPCR complex. Stimulation of a class A GPCR, such as ADRB2, induces transient ubiquitination and subsequently promotes association with USP33. Stimulation of a class B GPCR promotes a sustained ubiquitination. Deubiquitinated by USP20; allowing USP20 to deubiquitinate TRAF6 leading to inhibition of NF-kappa-B signaling. In terms of processing, hydroxylation by PHD2 modulates the rate of internalization by slowing down recruitment to the plasma membrane and inhibiting subsequent co-internalization with class A receptors. In terms of tissue distribution, predominantly localized in neuronal tissues and in the spleen.

The protein resides in the cytoplasm. It is found in the nucleus. The protein localises to the cell membrane. It localises to the membrane. Its subcellular location is the clathrin-coated pit. The protein resides in the cytoplasmic vesicle. Functionally, functions in regulating agonist-mediated G-protein coupled receptor (GPCR) signaling by mediating both receptor desensitization and resensitization processes. During homologous desensitization, beta-arrestins bind to the GPRK-phosphorylated receptor and sterically preclude its coupling to the cognate G-protein; the binding appears to require additional receptor determinants exposed only in the active receptor conformation. The beta-arrestins target many receptors for internalization by acting as endocytic adapters (CLASPs, clathrin-associated sorting proteins) and recruiting the GPRCs to the adapter protein 2 complex 2 (AP-2) in clathrin-coated pits (CCPs). However, the extent of beta-arrestin involvement appears to vary significantly depending on the receptor, agonist and cell type. Internalized arrestin-receptor complexes traffic to intracellular endosomes, where they remain uncoupled from G-proteins. Two different modes of arrestin-mediated internalization occur. Class A receptors, like ADRB2, OPRM1, ENDRA, D1AR and ADRA1B dissociate from beta-arrestin at or near the plasma membrane and undergo rapid recycling. Class B receptors, like AVPR2, AGTR1, NTSR1, TRHR and TACR1 internalize as a complex with arrestin and traffic with it to endosomal vesicles, presumably as desensitized receptors, for extended periods of time. Receptor resensitization then requires that receptor-bound arrestin is removed so that the receptor can be dephosphorylated and returned to the plasma membrane. Mediates endocytosis of CCR7 following ligation of CCL19 but not CCL21. Involved in internalization of P2RY1, P2RY4, P2RY6 and P2RY11 and ATP-stimulated internalization of P2RY2. Involved in phosphorylation-dependent internalization of OPRD1 and subsequent recycling or degradation. Involved in ubiquitination of IGF1R. Beta-arrestins function as multivalent adapter proteins that can switch the GPCR from a G-protein signaling mode that transmits short-lived signals from the plasma membrane via small molecule second messengers and ion channels to a beta-arrestin signaling mode that transmits a distinct set of signals that are initiated as the receptor internalizes and transits the intracellular compartment. Acts as a signaling scaffold for MAPK pathways such as MAPK1/3 (ERK1/2) and MAPK10 (JNK3). ERK1/2 and JNK3 activated by the beta-arrestin scaffold are largely excluded from the nucleus and confined to cytoplasmic locations such as endocytic vesicles, also called beta-arrestin signalosomes. Acts as a signaling scaffold for the AKT1 pathway. GPCRs for which the beta-arrestin-mediated signaling relies on both ARRB1 and ARRB2 (codependent regulation) include ADRB2, F2RL1 and PTH1R. For some GPCRs the beta-arrestin-mediated signaling relies on either ARRB1 or ARRB2 and is inhibited by the other respective beta-arrestin form (reciprocal regulation). Increases ERK1/2 signaling in AGTR1- and AVPR2-mediated activation (reciprocal regulation). Involved in CCR7-mediated ERK1/2 signaling involving ligand CCL19. Is involved in type-1A angiotensin II receptor/AGTR1-mediated ERK activity. Is involved in type-1A angiotensin II receptor/AGTR1-mediated MAPK10 activity. Is involved in dopamine-stimulated AKT1 activity in the striatum by disrupting the association of AKT1 with its negative regulator PP2A. Involved in AGTR1-mediated chemotaxis. Appears to function as signaling scaffold involved in regulation of MIP-1-beta-stimulated CCR5-dependent chemotaxis. Involved in attenuation of NF-kappa-B-dependent transcription in response to GPCR or cytokine stimulation by interacting with and stabilizing CHUK. Suppresses UV-induced NF-kappa-B-dependent activation by interacting with CHUK. The function is promoted by stimulation of ADRB2 and dephosphorylation of ARRB2. Involved in IL8-mediated granule release in neutrophils. Involved in p53/TP53-mediated apoptosis by regulating MDM2 and reducing the MDM2-mediated degradation of p53/TP53. May serve as nuclear messenger for GPCRs. Upon stimulation of OR1D2, may be involved in regulation of gene expression during the early processes of fertilization. Also involved in regulation of receptors other than GPCRs. Involved in endocytosis of TGFBR2 and TGFBR3 and down-regulates TGF-beta signaling such as NF-kappa-B activation. Involved in endocytosis of low-density lipoprotein receptor/LDLR. Involved in endocytosis of smoothened homolog/Smo, which also requires GRK2. Involved in endocytosis of SLC9A5. Involved in endocytosis of ENG and subsequent TGF-beta-mediated ERK activation and migration of epithelial cells. Involved in Toll-like receptor and IL-1 receptor signaling through the interaction with TRAF6 which prevents TRAF6 autoubiquitination and oligomerization required for activation of NF-kappa-B and JUN. Involved in insulin resistance by acting as insulin-induced signaling scaffold for SRC, AKT1 and INSR. Involved in regulation of inhibitory signaling of natural killer cells by recruiting PTPN6 and PTPN11 to KIR2DL1. Involved in the internalization of the atypical chemokine receptor ACKR3. Acts as an adapter protein coupling FFAR4 receptor to specific downstream signaling pathways, as well as mediating receptor endocytosis. During the activation step of NLRP3 inflammasome, directly associates with NLRP3 leading to inhibition of pro-inflammatory cytokine release and inhibition of inflammation. The sequence is that of Beta-arrestin-2 (Arrb2) from Mus musculus (Mouse).